A 49-amino-acid chain; its full sequence is Large ribosomal subunit protein bL32 (49 aa).

Residues 25–49 (AKPVKDKDGTYKLPHHINPTTGEYK) form a disordered region.

This sequence belongs to the bacterial ribosomal protein bL32 family.

The sequence is that of Large ribosomal subunit protein bL32 from Sulfurimonas denitrificans (strain ATCC 33889 / DSM 1251) (Thiomicrospira denitrificans (strain ATCC 33889 / DSM 1251)).